The sequence spans 155 residues: MLP-like protein 423 (155 aa).

The protein belongs to the MLP family.

This is MLP-like protein 423 (MLP423) from Arabidopsis thaliana (Mouse-ear cress).